The primary structure comprises 628 residues: Biosynthetic arginine decarboxylase (628 aa).

Residue K99 is modified to N6-(pyridoxal phosphate)lysine. 279 to 289 (VDVGGGLGIDY) provides a ligand contact to substrate.

It belongs to the Orn/Lys/Arg decarboxylase class-II family. SpeA subfamily. It depends on Mg(2+) as a cofactor. Pyridoxal 5'-phosphate is required as a cofactor.

The enzyme catalyses L-arginine + H(+) = agmatine + CO2. In terms of biological role, catalyzes the biosynthesis of agmatine from arginine. The polypeptide is Biosynthetic arginine decarboxylase (Xylella fastidiosa (strain 9a5c)).